Consider the following 321-residue polypeptide: Ribosomal RNA small subunit methyltransferase H (321 aa).

Residues 34–36 (GGH), Asp54, Phe80, Asp102, and Gln109 each bind S-adenosyl-L-methionine.

This sequence belongs to the methyltransferase superfamily. RsmH family.

It localises to the cytoplasm. The enzyme catalyses cytidine(1402) in 16S rRNA + S-adenosyl-L-methionine = N(4)-methylcytidine(1402) in 16S rRNA + S-adenosyl-L-homocysteine + H(+). Specifically methylates the N4 position of cytidine in position 1402 (C1402) of 16S rRNA. The protein is Ribosomal RNA small subunit methyltransferase H of Blochmanniella floridana.